Consider the following 148-residue polypeptide: Dermatopontin (148 aa).

An intrachain disulfide couples cysteine 14 to cysteine 40. Asparagine 44 carries an N-linked (GlcNAc...) asparagine glycan. 2 cysteine pairs are disulfide-bonded: cysteine 66–cysteine 93 and cysteine 103–cysteine 147.

The protein belongs to the dermatopontin family. The terminal mannose residues of the polysaccharide are 3-O-methylated. No tyrosine sulfation was detected.

The protein resides in the secreted. It localises to the extracellular space. The protein localises to the extracellular matrix. In terms of biological role, seems to mediate adhesion by cell surface integrin binding. The polypeptide is Dermatopontin (Biomphalaria glabrata (Bloodfluke planorb)).